Reading from the N-terminus, the 364-residue chain is Mannitol-1-phosphate 5-dehydrogenase (364 aa).

6-17 (VLHFGAGNIGRG) is a binding site for NAD(+).

This sequence belongs to the mannitol dehydrogenase family.

It catalyses the reaction D-mannitol 1-phosphate + NAD(+) = beta-D-fructose 6-phosphate + NADH + H(+). This chain is Mannitol-1-phosphate 5-dehydrogenase (mtlD), found in Mycoplasma pneumoniae (strain ATCC 29342 / M129 / Subtype 1) (Mycoplasmoides pneumoniae).